Consider the following 463-residue polypeptide: DNA-binding protein K10 (463 aa).

Polar residues predominate over residues 1–13 (MVSKNQFYQNWTM). A disordered region spans residues 1–304 (MVSKNQFYQN…RNGPGPGPMM (304 aa)). The segment covering 14–50 (QSQQQHPHQMQQQFQQQQQPNLQHRNNQSNNNNCNNN) has biased composition (low complexity). A compositionally biased stretch (polar residues) spans 85–94 (QMMFSSSQMP). 7 repeat units span residues 87-94 (MFSSSQMP), 95-102 (SDPLYIDF), 103-110 (SSPPPGFK), 111-118 (HNQVGSPK), 119-126 (KKSMKGIK), 127-134 (QQQHPSPN), and 135-142 (QQQPPSPN). Positions 87-142 (MFSSSQMPSDPLYIDFSSPPPGFKHNQVGSPKKKSMKGIKQQQHPSPNQQQPPSPN) are 7 X approximate tandem repeats. Over residues 142-193 (NQQQHPSPNQQQHPSPNQQQHPNSNQQQHLSPNQQQGKMNNQNNNHMNQSQQ) the composition is skewed to low complexity. The span at 194–214 (PFNNQMNGSDWQRHPGNNPNQ) shows a compositional bias: polar residues. Composition is skewed to pro residues over residues 225–270 (GPPP…PPVP) and 282–291 (GGPPPPPPPL). Positions 397 to 416 (DELFAQYKGQRDKFVSLYEA) form a DNA-binding region, H-T-H motif. Residues 426–463 (AATVKAKDAKSDKDKNAISSQSAAPKAGSAKDATIPNP) form a disordered region. Over residues 430-441 (KAKDAKSDKDKN) the composition is skewed to basic and acidic residues.

As to quaternary structure, interacts (via N-terminus) with sqd; the interaction is direct and may be involved in localization of sqd to the oocyte during oogenesis.

The protein localises to the nucleus. Functionally, may be involved in localization of sqd to the oocyte during oogenesis. This chain is DNA-binding protein K10 (fs(1)K10), found in Drosophila melanogaster (Fruit fly).